Reading from the N-terminus, the 156-residue chain is Small ribosomal subunit protein uS7 (156 aa).

It belongs to the universal ribosomal protein uS7 family. Part of the 30S ribosomal subunit. Contacts proteins S9 and S11.

One of the primary rRNA binding proteins, it binds directly to 16S rRNA where it nucleates assembly of the head domain of the 30S subunit. Is located at the subunit interface close to the decoding center, probably blocks exit of the E-site tRNA. The polypeptide is Small ribosomal subunit protein uS7 (Rhizorhabdus wittichii (strain DSM 6014 / CCUG 31198 / JCM 15750 / NBRC 105917 / EY 4224 / RW1) (Sphingomonas wittichii)).